The sequence spans 168 residues: Small ribosomal subunit protein uS8 (168 aa).

Positions 59-93 (EEYKKMKELAEKSPNPKMKRYLKQLEEYNKGTQYP) are not found in other S8 sequences.

The protein belongs to the universal ribosomal protein uS8 family. As to quaternary structure, part of the 30S ribosomal subunit. Contacts proteins S5 and S12.

One of the primary rRNA binding proteins, it binds directly to 16S rRNA central domain where it helps coordinate assembly of the platform of the 30S subunit. This Aquifex aeolicus (strain VF5) protein is Small ribosomal subunit protein uS8.